A 675-amino-acid polypeptide reads, in one-letter code: Neurexin-3b-beta (675 aa).

Residues 1-30 form the signal peptide; the sequence is MRPHFKTRYPQWLSCMLPLVTGCVFGAVWG. At 31–599 the chain is on the extracellular side; it reads SNLDSTVVLS…EVIRESSSTT (569 aa). In terms of domain architecture, Laminin G-like spans 81–281; it reads ATYIFGKGGG…HANIKINGSV (201 aa). 2 disordered regions span residues 313-337 and 490-534; these read TTLSTTTTRKQRSPPTIQTTDDIVS and FKPK…MNNR. Positions 325-335 are enriched in polar residues; that stretch reads SPPTIQTTDDI. The chain crosses the membrane as a helical span at residues 600–620; the sequence is GMVVGIVSAAALCILILLYAM. Residues 621 to 675 are Cytoplasmic-facing; sequence YKYRNRDEGSYQVDETRNYISNSAQNNGTVVKDKQPSTKGASNKRPKDKDKEYYV. Residues 642–675 form a disordered region; sequence NSAQNNGTVVKDKQPSTKGASNKRPKDKDKEYYV. Positions 665-675 are enriched in basic and acidic residues; the sequence is RPKDKDKEYYV.

It belongs to the neurexin family. Post-translationally, processed by alpha-secretase leading to the formation of an extracellular soluble protein as well as a C-terminal membrane-embedded fragment (CTF). Proteolysis of these CTFs by gamma-secretase releases intracellular domains (ICDs) and extracellular peptides.

The protein resides in the membrane. Neuronal cell surface protein that may be involved in cell recognition and cell adhesion. The chain is Neurexin-3b-beta (nrxn3b) from Danio rerio (Zebrafish).